Consider the following 362-residue polypeptide: Putative F-box protein At3g25750 (362 aa).

One can recognise an F-box domain in the interval 4 to 52 (TEWSDLPEELLDLIANRYSSNIDVLRIRSTCKSWRSAVAMSKERLQFRF).

This is Putative F-box protein At3g25750 from Arabidopsis thaliana (Mouse-ear cress).